A 570-amino-acid chain; its full sequence is Zeta-carotene desaturase, chloroplastic/chromoplastic (570 aa).

Residues 1–16 (MASVAATTTLAPALAP) are compositionally biased toward low complexity. The tract at residues 1–33 (MASVAATTTLAPALAPRRARPGTGLVPPRRASA) is disordered.

It belongs to the zeta carotene desaturase family. NAD(+) is required as a cofactor. It depends on NADP(+) as a cofactor. Requires FAD as cofactor.

Its subcellular location is the plastid. The protein localises to the chloroplast. The protein resides in the chromoplast. The catalysed reaction is 9,9'-di-cis-zeta-carotene + 2 a quinone = 7,7',9,9'-tetra-cis-lycopene + 2 a quinol. It participates in carotenoid biosynthesis; lycopene biosynthesis. Catalyzes the conversion of zeta-carotene to lycopene via the intermediary of neurosporene. It carries out two consecutive desaturations (introduction of double bonds) at positions C-7 and C-7'. The polypeptide is Zeta-carotene desaturase, chloroplastic/chromoplastic (ZDS1) (Zea mays (Maize)).